Reading from the N-terminus, the 156-residue chain is C-type lectin lectoxin-Phi2 (156 aa).

A signal peptide spans 1–23; that stretch reads MGRFIFVSLGLLVLAFSLSGIGA. Disulfide bonds link Cys27-Cys38, Cys55-Cys154, and Cys129-Cys146. The C-type lectin domain occupies 34–155; it reads HNVSCYKLIN…CNRRHRFLCK (122 aa). N-linked (GlcNAc...) asparagine glycosylation is found at Asn35 and Asn109. The Mannose-binding motif lies at 119–121; it reads EPN. Positions 127, 142, and 143 each coordinate Ca(2+).

Belongs to the true venom lectin family. Expressed by the venom gland.

The protein resides in the secreted. Mannose-binding lectin which recognizes specific carbohydrate structures and agglutinates a variety of animal cells by binding to cell-surface glycoproteins and glycolipids. May be a calcium-dependent lectin. This Philodryas olfersii (Green snake) protein is C-type lectin lectoxin-Phi2.